We begin with the raw amino-acid sequence, 87 residues long: Glutaredoxin 1 (87 aa).

The 87-residue stretch at 1-87 folds into the Glutaredoxin domain; that stretch reads MFTVIFGRPG…WAKENLNLFA (87 aa). An intrachain disulfide couples Cys-11 to Cys-14.

Belongs to the glutaredoxin family. As to quaternary structure, monomer.

In terms of biological role, the disulfide bond functions as an electron carrier in the glutathione-dependent synthesis of deoxyribonucleotides by the enzyme ribonucleotide reductase. In addition, it is also involved in reducing some disulfides in a coupled system with glutathione reductase. This is Glutaredoxin 1 (grxA) from Salmonella typhi.